A 266-amino-acid polypeptide reads, in one-letter code: uncharacterized protein (266 aa).

4 helical membrane passes run 9–29, 79–99, 122–142, and 193–213; these read IFII…IELP, GIMT…INPF, LSVM…MLSG, and GWYL…MVFI.

It localises to the membrane. This is an uncharacterized protein from Dictyostelium discoideum (Social amoeba).